A 1118-amino-acid chain; its full sequence is Cytospin-A (1118 aa).

Disordered regions lie at residues Met1 to Ile157 and Gly198 to Ser221. Composition is skewed to polar residues over residues Asn57 to Thr102 and Ser112 to Ala123. The span at Ser144–Ser153 shows a compositional bias: basic and acidic residues. Residues Glu204–Glu215 are compositionally biased toward acidic residues. Positions Ala225–Gly264 form a coiled coil. Positions Ala289–Glu379 are disordered. The span at Ser343 to Ala363 shows a compositional bias: low complexity. Coiled-coil stretches lie at residues Cys384–Leu438 and Gly475–Val796. 3 disordered regions span residues Gln771–Asp790, Phe837–Ala876, and Ser920–Asp1001. The segment covering Asp838–Val855 has biased composition (polar residues). Pro residues predominate over residues Pro861–Thr872. Positions Gln930–Arg945 are enriched in polar residues. The span at Arg946 to Ser956 shows a compositional bias: basic and acidic residues. Residues Ala961–Ser986 are compositionally biased toward low complexity. Positions Gly1012 to Glu1117 constitute a Calponin-homology (CH) domain.

It belongs to the cytospin-A family. May interact with both microtubules and actin cytoskeleton.

It is found in the cytoplasm. The protein resides in the cytoskeleton. It localises to the spindle. The protein localises to the cell junction. Its subcellular location is the gap junction. In terms of biological role, involved in cytokinesis and spindle organization. May play a role in actin cytoskeleton organization and microtubule stabilization and hence required for proper cell adhesion and migration. The chain is Cytospin-A (specc1l) from Takifugu rubripes (Japanese pufferfish).